Here is a 300-residue protein sequence, read N- to C-terminus: 7-methylguanosine phosphate-specific 5'-nucleotidase (300 aa).

D41 serves as the catalytic Nucleophile. Positions 41 and 43 each coordinate Mg(2+). Catalysis depends on D43, which acts as the Proton donor. E88 serves as a coordination point for CMP. E88 is a N(7)-methyl-GMP binding site. Residues 156 to 157 (SA) and K205 each bind substrate. D230 contributes to the Mg(2+) binding site. K256 is subject to N6-acetyllysine.

This sequence belongs to the pyrimidine 5'-nucleotidase family. Monomer.

Its subcellular location is the cytoplasm. The enzyme catalyses N(7)-methyl-GMP + H2O = N(7)-methylguanosine + phosphate. It catalyses the reaction CMP + H2O = cytidine + phosphate. It carries out the reaction a ribonucleoside 5'-phosphate + H2O = a ribonucleoside + phosphate. Specifically hydrolyzes 7-methylguanosine monophosphate (m(7)GMP) to 7-methylguanosine and inorganic phosphate. The specific activity for m(7)GMP may protect cells against undesired salvage of m(7)GMP and its incorporation into nucleic acids. Also has weak activity for CMP. UMP and purine nucleotides are poor substrates. The sequence is that of 7-methylguanosine phosphate-specific 5'-nucleotidase (NT5C3B) from Homo sapiens (Human).